The primary structure comprises 228 residues: Cytochrome c oxidase subunit 2 (228 aa).

Residues 1–14 lie on the Mitochondrial intermembrane side of the membrane; the sequence is MANHSQLGFQDASS. Residues 15–45 form a helical membrane-spanning segment; the sequence is PIMEELVEFHDHALIVALAICSLVLYLLAHM. Residues 46–58 lie on the Mitochondrial matrix side of the membrane; it reads LMEKLSSNAVDAQ. A helical transmembrane segment spans residues 59–86; it reads EVELIWTILPAIVLVLLALPSLQILYMM. Over 87–228 the chain is Mitochondrial intermembrane; the sequence is DEIDEPDLTL…EAWSSLLSSS (142 aa). The Cu cation site is built by His160, Cys195, Glu197, Cys199, His203, and Met206. Glu197 lines the Mg(2+) pocket.

The protein belongs to the cytochrome c oxidase subunit 2 family. In terms of assembly, component of the cytochrome c oxidase (complex IV, CIV), a multisubunit enzyme composed of 14 subunits. The complex is composed of a catalytic core of 3 subunits MT-CO1, MT-CO2 and MT-CO3, encoded in the mitochondrial DNA, and 11 supernumerary subunits COX4I, COX5A, COX5B, COX6A, COX6B, COX6C, COX7A, COX7B, COX7C, COX8 and NDUFA4, which are encoded in the nuclear genome. The complex exists as a monomer or a dimer and forms supercomplexes (SCs) in the inner mitochondrial membrane with NADH-ubiquinone oxidoreductase (complex I, CI) and ubiquinol-cytochrome c oxidoreductase (cytochrome b-c1 complex, complex III, CIII), resulting in different assemblies (supercomplex SCI(1)III(2)IV(1) and megacomplex MCI(2)III(2)IV(2)). Found in a complex with TMEM177, COA6, COX18, COX20, SCO1 and SCO2. Interacts with TMEM177 in a COX20-dependent manner. Interacts with COX20. Interacts with COX16. Cu cation serves as cofactor.

Its subcellular location is the mitochondrion inner membrane. It catalyses the reaction 4 Fe(II)-[cytochrome c] + O2 + 8 H(+)(in) = 4 Fe(III)-[cytochrome c] + 2 H2O + 4 H(+)(out). Component of the cytochrome c oxidase, the last enzyme in the mitochondrial electron transport chain which drives oxidative phosphorylation. The respiratory chain contains 3 multisubunit complexes succinate dehydrogenase (complex II, CII), ubiquinol-cytochrome c oxidoreductase (cytochrome b-c1 complex, complex III, CIII) and cytochrome c oxidase (complex IV, CIV), that cooperate to transfer electrons derived from NADH and succinate to molecular oxygen, creating an electrochemical gradient over the inner membrane that drives transmembrane transport and the ATP synthase. Cytochrome c oxidase is the component of the respiratory chain that catalyzes the reduction of oxygen to water. Electrons originating from reduced cytochrome c in the intermembrane space (IMS) are transferred via the dinuclear copper A center (CU(A)) of subunit 2 and heme A of subunit 1 to the active site in subunit 1, a binuclear center (BNC) formed by heme A3 and copper B (CU(B)). The BNC reduces molecular oxygen to 2 water molecules using 4 electrons from cytochrome c in the IMS and 4 protons from the mitochondrial matrix. In Anas platyrhynchos (Mallard), this protein is Cytochrome c oxidase subunit 2 (MT-CO2).